Consider the following 601-residue polypeptide: Sodium-dependent phosphate transport protein 2C (601 aa).

Residues 1–75 (MPNSLAGGQV…RRVVSSFLKA (75 aa)) are Cytoplasmic-facing. Ser4 bears the Phosphoserine mark. A helical membrane pass occupies residues 76–96 (CGLLGSLYFFICSLDILSSAF). The Extracellular portion of the chain corresponds to 97-110 (QLLGSKMAGDIFKD). The helical transmembrane segment at 111–131 (NVVLSNPVAGLVIGVLVTVLV) threads the bilayer. Topologically, residues 132–187 (QSSSTSSSIVVSMVASKLLTVQVSVPIIMGVNVGTSITSTLVSMAQSGDRDEFQRA) are cytoplasmic. Residues 188 to 208 (FSGSAVHGIFNWLTVLVLLPL) form a helical membrane-spanning segment. The Extracellular segment spans residues 209-324 (ESATAALERL…FAGSKLTDLA (116 aa)). N-linked (GlcNAc...) asparagine glycosylation is found at Asn264, Asn267, and Asn299. Cys275 and Cys311 form a disulfide bridge. The chain crosses the membrane as a helical span at residues 325–345 (VGFILLAGSLLVLCVCLVLIV). Residues 346–369 (KLLNSVLKGRIAQAVKTVINADFP) lie on the Cytoplasmic side of the membrane. Residues 370–390 (FPFGWLSGYLAILVGAGLTFL) traverse the membrane as a helical segment. Over 391 to 441 (LQSSSVFTAAIVPLMGVGVIDLERAYPLFLGSNIGTTTTALLAALASPADM) the chain is Extracellular. The helical transmembrane segment at 442–462 (LIFAVQVALIHFFFNLAGILL) threads the bilayer. Over 463 to 487 (WYLVPVLRLPIPLAKRFGNLTAQYR) the chain is Cytoplasmic. The helical transmembrane segment at 488–508 (WVAIVYLLLTFLLLPLAAFGL) threads the bilayer. Over 509 to 512 (SLAG) the chain is Extracellular. A helical transmembrane segment spans residues 513-533 (GTVLAAVGGPLVGLVLLIILV). At 534–601 (NVLQQHRPSW…NPQVIASQQL (68 aa)) the chain is on the cytoplasmic side.

Belongs to the SLC34A transporter family. Expressed only in the kidney.

The protein resides in the apical cell membrane. The catalysed reaction is 2 Na(+)(out) + phosphate(out) = 2 Na(+)(in) + phosphate(in). Involved in actively transporting phosphate into cells via Na(+) cotransport in the renal brush border membrane. The cotransport has a Na(+):Pi stoichiometry of 2:1 and is electroneutral. The protein is Sodium-dependent phosphate transport protein 2C (Slc34a3) of Mus musculus (Mouse).